A 216-amino-acid chain; its full sequence is Adenylate kinase (216 aa).

10–15 (GAGKGT) provides a ligand contact to ATP. Residues 30–59 (STGDIFRKNIKEGTELGKKAKEYMDQGLLV) form an NMP region. AMP-binding positions include T31, R36, 57–59 (LLV), 85–88 (GFPR), and Q92. The tract at residues 126-163 (GRRICKSCGATYHVEFNPPKVEGVCDVCQGELYQRADD) is LID. R127 serves as a coordination point for ATP. The Zn(2+) site is built by C130 and C133. 136–137 (TY) contacts ATP. C150 and C153 together coordinate Zn(2+). 2 residues coordinate AMP: R160 and R171. ATP is bound at residue Q199.

Belongs to the adenylate kinase family. Monomer.

Its subcellular location is the cytoplasm. The enzyme catalyses AMP + ATP = 2 ADP. The protein operates within purine metabolism; AMP biosynthesis via salvage pathway; AMP from ADP: step 1/1. Its function is as follows. Catalyzes the reversible transfer of the terminal phosphate group between ATP and AMP. Plays an important role in cellular energy homeostasis and in adenine nucleotide metabolism. The polypeptide is Adenylate kinase (Clostridioides difficile (strain 630) (Peptoclostridium difficile)).